Reading from the N-terminus, the 609-residue chain is Aspartate--tRNA(Asp/Asn) ligase (609 aa).

An L-aspartate-binding site is contributed by E175. Residues Q199–K202 are aspartate. R221 and H468 together coordinate L-aspartate. R221–E223 lines the ATP pocket. Residue E502 participates in ATP binding. R509 provides a ligand contact to L-aspartate. G554–R557 contacts ATP.

It belongs to the class-II aminoacyl-tRNA synthetase family. Type 1 subfamily. In terms of assembly, homodimer.

It localises to the cytoplasm. The enzyme catalyses tRNA(Asx) + L-aspartate + ATP = L-aspartyl-tRNA(Asx) + AMP + diphosphate. Aspartyl-tRNA synthetase with relaxed tRNA specificity since it is able to aspartylate not only its cognate tRNA(Asp) but also tRNA(Asn). Reaction proceeds in two steps: L-aspartate is first activated by ATP to form Asp-AMP and then transferred to the acceptor end of tRNA(Asp/Asn). This is Aspartate--tRNA(Asp/Asn) ligase from Caulobacter sp. (strain K31).